The chain runs to 481 residues: Aspartyl/glutamyl-tRNA(Asn/Gln) amidotransferase subunit B (481 aa).

The segment at 29 to 50 is disordered; it reads SSSKSSHTDPKNTNISPIDLGH.

The protein belongs to the GatB/GatE family. GatB subfamily. As to quaternary structure, heterotrimer of A, B and C subunits.

It catalyses the reaction L-glutamyl-tRNA(Gln) + L-glutamine + ATP + H2O = L-glutaminyl-tRNA(Gln) + L-glutamate + ADP + phosphate + H(+). The enzyme catalyses L-aspartyl-tRNA(Asn) + L-glutamine + ATP + H2O = L-asparaginyl-tRNA(Asn) + L-glutamate + ADP + phosphate + 2 H(+). Allows the formation of correctly charged Asn-tRNA(Asn) or Gln-tRNA(Gln) through the transamidation of misacylated Asp-tRNA(Asn) or Glu-tRNA(Gln) in organisms which lack either or both of asparaginyl-tRNA or glutaminyl-tRNA synthetases. The reaction takes place in the presence of glutamine and ATP through an activated phospho-Asp-tRNA(Asn) or phospho-Glu-tRNA(Gln). The polypeptide is Aspartyl/glutamyl-tRNA(Asn/Gln) amidotransferase subunit B (Malacoplasma penetrans (strain HF-2) (Mycoplasma penetrans)).